The sequence spans 582 residues: Glutaredoxin domain-containing cysteine-rich protein CG12206 (582 aa).

Positions 217-227 (CETLDSGTGSD) are enriched in polar residues. Disordered stretches follow at residues 217-244 (CETL…VRSP) and 260-300 (EADH…SCDS). Residues 291 to 300 (SSNSSLSCDS) are compositionally biased toward low complexity. The Glutaredoxin domain maps to 423 to 528 (NVKNYMEKDV…QLLRPYKSIA (106 aa)).

The protein belongs to the GRXCR1 family.

The sequence is that of Glutaredoxin domain-containing cysteine-rich protein CG12206 from Drosophila melanogaster (Fruit fly).